A 182-amino-acid chain; its full sequence is Large ribosomal subunit protein bL25 (182 aa).

Belongs to the bacterial ribosomal protein bL25 family. CTC subfamily. Part of the 50S ribosomal subunit; part of the 5S rRNA/L5/L18/L25 subcomplex. Contacts the 5S rRNA. Binds to the 5S rRNA independently of L5 and L18.

Its function is as follows. This is one of the proteins that binds to the 5S RNA in the ribosome where it forms part of the central protuberance. The sequence is that of Large ribosomal subunit protein bL25 from Borrelia hermsii (strain HS1 / DAH).